The following is a 521-amino-acid chain: Glutamate--tRNA ligase (521 aa).

The short motif at 30–40 is the 'HIGH' region element; that stretch reads PSPTGYLHVGG. The 'KMSKS' region signature appears at 277–281; that stretch reads KLSKR. Lys280 contacts ATP.

Belongs to the class-I aminoacyl-tRNA synthetase family. Glutamate--tRNA ligase type 1 subfamily. In terms of assembly, monomer.

The protein resides in the cytoplasm. The catalysed reaction is tRNA(Glu) + L-glutamate + ATP = L-glutamyl-tRNA(Glu) + AMP + diphosphate. Catalyzes the attachment of glutamate to tRNA(Glu) in a two-step reaction: glutamate is first activated by ATP to form Glu-AMP and then transferred to the acceptor end of tRNA(Glu). This Chlorobium phaeovibrioides (strain DSM 265 / 1930) (Prosthecochloris vibrioformis (strain DSM 265)) protein is Glutamate--tRNA ligase.